A 362-amino-acid polypeptide reads, in one-letter code: GTPase Obg (362 aa).

The Obg domain maps to Met-1 to Leu-159. The disordered stretch occupies residues His-129–Glu-148. A compositionally biased stretch (polar residues) spans Phe-130–Lys-141. Residues Ala-160–Asp-334 enclose the OBG-type G domain. GTP-binding positions include Gly-166 to Ser-173, Phe-191 to His-195, Asp-213 to Gly-216, Asn-284 to Asp-287, and Ser-315 to Leu-317. Mg(2+) is bound by residues Ser-173 and Thr-193. The tract at residues Arg-340–Asp-362 is disordered.

Belongs to the TRAFAC class OBG-HflX-like GTPase superfamily. OBG GTPase family. In terms of assembly, monomer. It depends on Mg(2+) as a cofactor.

The protein resides in the cytoplasm. In terms of biological role, an essential GTPase which binds GTP, GDP and possibly (p)ppGpp with moderate affinity, with high nucleotide exchange rates and a fairly low GTP hydrolysis rate. Plays a role in control of the cell cycle, stress response, ribosome biogenesis and in those bacteria that undergo differentiation, in morphogenesis control. This is GTPase Obg from Polynucleobacter asymbioticus (strain DSM 18221 / CIP 109841 / QLW-P1DMWA-1) (Polynucleobacter necessarius subsp. asymbioticus).